An 89-amino-acid chain; its full sequence is Large ribosomal subunit protein bL27 (89 aa).

Residues 1–22 are disordered; the sequence is MAQKKAGGSSRNGRDSAGRRLG.

Belongs to the bacterial ribosomal protein bL27 family.

This is Large ribosomal subunit protein bL27 from Gluconacetobacter diazotrophicus (strain ATCC 49037 / DSM 5601 / CCUG 37298 / CIP 103539 / LMG 7603 / PAl5).